Reading from the N-terminus, the 275-residue chain is NH(3)-dependent NAD(+) synthetase (275 aa).

Residue 46–53 coordinates ATP; that stretch reads GISGGQDS. Asp-52 is a binding site for Mg(2+). Residue Arg-140 coordinates deamido-NAD(+). Thr-160 provides a ligand contact to ATP. Glu-165 serves as a coordination point for Mg(2+). Residues Lys-173 and Asp-180 each coordinate deamido-NAD(+). 2 residues coordinate ATP: Lys-189 and Thr-211. 260–261 is a binding site for deamido-NAD(+); it reads HK.

This sequence belongs to the NAD synthetase family. Homodimer.

The enzyme catalyses deamido-NAD(+) + NH4(+) + ATP = AMP + diphosphate + NAD(+) + H(+). The protein operates within cofactor biosynthesis; NAD(+) biosynthesis; NAD(+) from deamido-NAD(+) (ammonia route): step 1/1. Catalyzes the ATP-dependent amidation of deamido-NAD to form NAD. Uses ammonia as a nitrogen source. The polypeptide is NH(3)-dependent NAD(+) synthetase (Escherichia fergusonii (strain ATCC 35469 / DSM 13698 / CCUG 18766 / IAM 14443 / JCM 21226 / LMG 7866 / NBRC 102419 / NCTC 12128 / CDC 0568-73)).